The primary structure comprises 828 residues: Leucine--tRNA ligase (828 aa).

A 'HIGH' region motif is present at residues 42-52; sequence PYPSGTLHVGH. Positions 582-586 match the 'KMSKS' region motif; that stretch reads KMSKS. Residue Lys585 coordinates ATP.

This sequence belongs to the class-I aminoacyl-tRNA synthetase family.

The protein localises to the cytoplasm. It catalyses the reaction tRNA(Leu) + L-leucine + ATP = L-leucyl-tRNA(Leu) + AMP + diphosphate. The protein is Leucine--tRNA ligase of Petrotoga mobilis (strain DSM 10674 / SJ95).